A 66-amino-acid polypeptide reads, in one-letter code: Phylloseptin-S3 (66 aa).

Positions 1–22 are cleaved as a signal peptide; the sequence is MAFLKKSLFLVLFLGLVSLSIC. Residues 23–46 constitute a propeptide that is removed on maturation; that stretch reads EEEKRETEEEEHDQEEDDKSEEKR. The tract at residues 25–44 is disordered; the sequence is EKRETEEEEHDQEEDDKSEE. The span at 30–41 shows a compositional bias: acidic residues; that stretch reads EEEEHDQEEDDK. Position 65 is a phenylalanine amide (Phe-65).

The protein belongs to the frog skin active peptide (FSAP) family. Phylloseptin subfamily. In terms of tissue distribution, expressed by the skin glands.

It is found in the secreted. The protein resides in the target cell membrane. Functionally, antimicrobial peptide with activity against the Gram-positive S.pyogenes (MIC=12.5 uM), but not against all other bacteria tested (both Gram-positive and Gram-negative). Does not show activity against fungi, and against Leishmania species. The polypeptide is Phylloseptin-S3 (Phyllomedusa sauvagei (Sauvage's leaf frog)).